A 150-amino-acid chain; its full sequence is MMFFSSTFFVLLLFAILGLISKNMTLSISVVCLFFLSFIYPNLIFPWVEKYALKAGILILTIAVLAPIASGKINARDIFNSFTHWQSILGILIGVFVSWLGGRGVSLMSHQPSVVTGLLVGTILGVAFFKGVPVGPLIAAGLLSLALGKF.

Helical transmembrane passes span 1–21, 28–48, 51–71, 88–108, and 123–143; these read MMFF…GLIS, ISVV…FPWV, YALK…IASG, ILGI…VSLM, and ILGV…AGLL.

Belongs to the UPF0756 family.

It is found in the cell membrane. In Hamiltonella defensa subsp. Acyrthosiphon pisum (strain 5AT), this protein is UPF0756 membrane protein HDEF_0364.